Here is a 362-residue protein sequence, read N- to C-terminus: Transcription factor bHLH133 (362 aa).

The bHLH domain occupies 209-258 (LQVPSSQSTLKVRKEKLGGRIASLHQLVSPFGKTDTASVLSEAIGYIRFL).

The protein belongs to the bHLH protein family. In terms of assembly, homodimer.

It localises to the nucleus. The chain is Transcription factor bHLH133 (BHLH133) from Arabidopsis thaliana (Mouse-ear cress).